We begin with the raw amino-acid sequence, 166 residues long: 16S rRNA aminocarboxypropyltransferase (166 aa).

S-adenosyl-L-methionine-binding residues include threonine 17, isoleucine 62, leucine 84, tyrosine 99, and serine 103.

It belongs to the TDD superfamily. TSR3 family.

The protein resides in the cytoplasm. It carries out the reaction an N(1)-methylpseudouridine in rRNA + S-adenosyl-L-methionine = N(1)-methyl-N(3)-[(3S)-3-amino-3-carboxypropyl]pseudouridine in rRNA + S-methyl-5'-thioadenosine + H(+). Functionally, aminocarboxypropyltransferase that catalyzes the aminocarboxypropyl transfer on pseudouridine corresponding to position 914 in M.jannaschii 16S rRNA. It constitutes the last step in biosynthesis of the hypermodified N1-methyl-N3-(3-amino-3-carboxypropyl) pseudouridine (m1acp3-Psi). The sequence is that of 16S rRNA aminocarboxypropyltransferase from Saccharolobus islandicus (strain M.16.27) (Sulfolobus islandicus).